Consider the following 121-residue polypeptide: Large ribosomal subunit protein bL12 (121 aa).

Belongs to the bacterial ribosomal protein bL12 family. As to quaternary structure, homodimer. Part of the ribosomal stalk of the 50S ribosomal subunit. Forms a multimeric L10(L12)X complex, where L10 forms an elongated spine to which 2 to 4 L12 dimers bind in a sequential fashion. Binds GTP-bound translation factors.

In terms of biological role, forms part of the ribosomal stalk which helps the ribosome interact with GTP-bound translation factors. Is thus essential for accurate translation. The chain is Large ribosomal subunit protein bL12 from Clostridium perfringens (strain ATCC 13124 / DSM 756 / JCM 1290 / NCIMB 6125 / NCTC 8237 / Type A).